The primary structure comprises 373 residues: 4-hydroxy-3-methylbut-2-en-1-yl diphosphate synthase (flavodoxin) (373 aa).

Residues C270, C273, C305, and E312 each contribute to the [4Fe-4S] cluster site.

This sequence belongs to the IspG family. [4Fe-4S] cluster is required as a cofactor.

The enzyme catalyses (2E)-4-hydroxy-3-methylbut-2-enyl diphosphate + oxidized [flavodoxin] + H2O + 2 H(+) = 2-C-methyl-D-erythritol 2,4-cyclic diphosphate + reduced [flavodoxin]. The protein operates within isoprenoid biosynthesis; isopentenyl diphosphate biosynthesis via DXP pathway; isopentenyl diphosphate from 1-deoxy-D-xylulose 5-phosphate: step 5/6. Functionally, converts 2C-methyl-D-erythritol 2,4-cyclodiphosphate (ME-2,4cPP) into 1-hydroxy-2-methyl-2-(E)-butenyl 4-diphosphate. In Proteus mirabilis (strain HI4320), this protein is 4-hydroxy-3-methylbut-2-en-1-yl diphosphate synthase (flavodoxin).